An 87-amino-acid chain; its full sequence is Exodeoxyribonuclease 7 small subunit (87 aa).

Belongs to the XseB family. As to quaternary structure, heterooligomer composed of large and small subunits.

It is found in the cytoplasm. It catalyses the reaction Exonucleolytic cleavage in either 5'- to 3'- or 3'- to 5'-direction to yield nucleoside 5'-phosphates.. Bidirectionally degrades single-stranded DNA into large acid-insoluble oligonucleotides, which are then degraded further into small acid-soluble oligonucleotides. The protein is Exodeoxyribonuclease 7 small subunit of Solidesulfovibrio magneticus (strain ATCC 700980 / DSM 13731 / RS-1) (Desulfovibrio magneticus).